Here is a 972-residue protein sequence, read N- to C-terminus: Glycine dehydrogenase (decarboxylating) (972 aa).

Residue K713 is modified to N6-(pyridoxal phosphate)lysine.

The protein belongs to the GcvP family. The glycine cleavage system is composed of four proteins: P, T, L and H. Requires pyridoxal 5'-phosphate as cofactor.

It carries out the reaction N(6)-[(R)-lipoyl]-L-lysyl-[glycine-cleavage complex H protein] + glycine + H(+) = N(6)-[(R)-S(8)-aminomethyldihydrolipoyl]-L-lysyl-[glycine-cleavage complex H protein] + CO2. The glycine cleavage system catalyzes the degradation of glycine. The P protein binds the alpha-amino group of glycine through its pyridoxal phosphate cofactor; CO(2) is released and the remaining methylamine moiety is then transferred to the lipoamide cofactor of the H protein. In Aromatoleum aromaticum (strain DSM 19018 / LMG 30748 / EbN1) (Azoarcus sp. (strain EbN1)), this protein is Glycine dehydrogenase (decarboxylating).